A 334-amino-acid chain; its full sequence is Transcription initiation factor IIB (334 aa).

The TFIIB-type zinc-finger motif lies at 34–65 (TESVCPECKSRQLVHDYERAELVCQNCGLVID). 4 residues coordinate Zn(2+): Cys38, Cys41, Cys57, and Cys60. Repeat copies occupy residues 151-234 (SELD…SREL) and 245-326 (DYVP…ELAE).

Belongs to the TFIIB family.

Stabilizes TBP binding to an archaeal box-A promoter. Also responsible for recruiting RNA polymerase II to the pre-initiation complex (DNA-TBP-TFIIB). This chain is Transcription initiation factor IIB, found in Methanosphaerula palustris (strain ATCC BAA-1556 / DSM 19958 / E1-9c).